The sequence spans 548 residues: Probable 5-epi-aristolochene synthase 4 (548 aa).

Mg(2+) contacts are provided by Asp301, Asp305, Asp444, Thr448, and Glu452. Residues 301 to 305 (DDTFD) carry the DDXXD motif motif.

Belongs to the terpene synthase family. As to quaternary structure, monomer. The cofactor is Mg(2+).

It localises to the cytoplasm. The enzyme catalyses (2E,6E)-farnesyl diphosphate = (+)-5-epi-aristolochene + diphosphate. The protein operates within secondary metabolite biosynthesis; terpenoid biosynthesis. In terms of biological role, catalyzes the cyclization of trans,trans-farnesyl diphosphate (FPP) to the bicyclic intermediate 5-epi-aristolochene, initial step in the conversion of FPP to the sesquiterpenoid antifungal phytoalexin capsidiol. Produces germacrene A as an enzyme-bound intermediate that is not released by the enzyme, but is further cyclized to produce the bicyclic 5-epi-aristolochene. The chain is Probable 5-epi-aristolochene synthase 4 from Nicotiana attenuata (Coyote tobacco).